The chain runs to 523 residues: Flavin-dependent halogenase armH5 (523 aa).

Gly-17, Ala-20, and Glu-50 together coordinate FAD. Chloride-binding residues include Ser-328 and Gly-329. Val-330 is an FAD binding site.

Belongs to the flavin-dependent halogenase family.

It carries out the reaction melleolide F + FADH2 + chloride + O2 = 6'-chloromelleolide F + FAD + 2 H2O + H(+). Flavin-dependent halogenase involved in the biosynthesis of melleolides, a range of antifungal and phytotoxic polyketide derivatives composed of an orsellinic acid (OA) moiety esterified to various sesquiterpene alcohols. The halogenase catalyzes the transfer of a single chlorine atom to the melleolide backbone, resulting in a 6'-chloromelleolide product. The enzyme acts on free substrate and does not depend on carrier-protein-dependent acceptor molecules. This chain is Flavin-dependent halogenase armH5, found in Armillaria mellea (Honey mushroom).